Consider the following 499-residue polypeptide: Probable alkaline/neutral invertase F (499 aa).

Ser-11 is modified (phosphoserine). Thr-20 is modified (phosphothreonine). At Ser-497 the chain carries Phosphoserine.

Belongs to the glycosyl hydrolase 100 family.

It carries out the reaction Hydrolysis of terminal non-reducing beta-D-fructofuranoside residues in beta-D-fructofuranosides.. Its function is as follows. Invertase that cleaves sucrose into glucose and fructose. In Arabidopsis thaliana (Mouse-ear cress), this protein is Probable alkaline/neutral invertase F.